Consider the following 373-residue polypeptide: MYTLKQDRPHPVPPPPPLTMDHLQHGYSTNTPVTLPGIPEAARSVSTVYEGRIYSLDVVQQPIRARMCGFGDKDRRPLTPPPCIRLIVRDATTQKEIDINEIDTSFYVLTVDLWNAEGTSEVNLVRHSATSPSISTATSSAYPPPANIMPFPQYAQTHGYPQTAYPPYYGGQPGYNPHAGYQYPQGGPDPYYPGLPAASTYYPPGTPTQALGPQSALGPHISSASTGMFTRNLIGSLSASAFRLTDPDDKIGVWFVLQDLSVRTEGSFRLKMNFVNVGTQSQAQDQSPGGTPSSPVINVGSAPVLASAFSEVFQVYSAKKFPGVIESTPLSKCFAFQGIKIPIRKDGVKGPRGGQSHGSKGQDGEGEDWENEG.

A compositionally biased stretch (basic and acidic residues) spans 1-10 (MYTLKQDRPH). Disordered stretches follow at residues 1–26 (MYTL…LQHG) and 344–373 (RKDG…ENEG). The 297-residue stretch at 48–344 (VYEGRIYSLD…AFQGIKIPIR (297 aa)) folds into the Velvet domain. Acidic residues predominate over residues 364 to 373 (GEGEDWENEG).

It belongs to the velvet family. VelB subfamily. In terms of assembly, component of the heterotrimeric velvet complex composed of LAE1, VEL1 and VEL2; VEL1A acting as a bridging protein between LAE1 and VEL2. Forms a heterodimeric complex with VOS1; the formation of the VEL2-VOS1 complex is light-dependent.

Its subcellular location is the nucleus. It localises to the cytoplasm. Its function is as follows. Component of the velvet transcription factor complex that controls sexual/asexual developmental ratio in response to light, promoting sexual development in the darkness while stimulating asexual sporulation under illumination. The velvet complex acts as a global regulator for secondary metabolite gene expression. Component of the RYP2-RYP3 heterodimeric complex that plays a dual role in activating genes associated with spore maturation and repressing certain development-associated genes. The complex binds DNA through the DNA-binding domain of RYP2 that recognizes an 11-nucleotide consensus sequence 5'-CTGGCCGCGGC-3' consisting of two motifs in the promoters of key developmental regulatory genes. Required for viable spore production and regulation of sporulation in response to temperature, as well as for the switch to yeast-form in the presence of host cells. This Ajellomyces capsulatus (Darling's disease fungus) protein is Velvet complex subunit RYP3 (RYP3).